The primary structure comprises 322 residues: Hydroxypyruvate reductase (322 aa).

Residues 160–161 (RI), Asp-180, 211–212 (CP), 238–240 (NSR), and Asp-264 contribute to the NAD(+) site. Arg-240 is a catalytic residue. Glu-269 is a catalytic residue. The active-site Proton donor is the His-288.

The protein belongs to the D-isomer specific 2-hydroxyacid dehydrogenase family.

The catalysed reaction is (R)-glycerate + NAD(+) = 3-hydroxypyruvate + NADH + H(+). The protein operates within carbohydrate metabolism. Its function is as follows. Involved in catabolism of D-apiose. Catalyzes the reduction of 3-hydroxypyruvate to glycerate. This is Hydroxypyruvate reductase from Blautia hydrogenotrophica (strain DSM 10507 / JCM 14656 / S5a33) (Ruminococcus hydrogenotrophicus).